The sequence spans 385 residues: Basigin (385 aa).

The N-terminal stretch at 1–21 is a signal peptide; it reads MAAALFVLLGFALLGTHGASG. The Ig-like domain maps to 37 to 120; it reads GGSVELHCEA…SNDPDRNHLT (84 aa). 3 cysteine pairs are disulfide-bonded: Cys-44-Cys-108, Cys-157-Cys-203, and Cys-242-Cys-301. The region spanning 138 to 219 is the Ig-like C2-type domain; it reads EPGTVFTTVE…MGTANIQLHG (82 aa). The Extracellular segment spans residues 138 to 323; sequence EPGTVFTTVE…ITLRVRSHLA (186 aa). Asn-160 is a glycosylation site (N-linked (GlcNAc...) asparagine). Positions 195–199 are essential for interaction with KDR/VEGFR2; the sequence is DDQWG. An Ig-like V-type domain is found at 221-315; it reads PRVKAVKSSE…SKGSDQAIIT (95 aa). Residues Asn-268 and Asn-302 are each glycosylated (N-linked (GlcNAc...) asparagine). The chain crosses the membrane as a helical span at residues 324–344; it reads ALWPFLGIVAEVLVLVTIIFI. At 345–385 the chain is on the cytoplasmic side; sequence YEKRRKPEDVLDDDDAGSAPLKSSGQHQNDKGKNVRQRNSS. The disordered stretch occupies residues 353–385; that stretch reads DVLDDDDAGSAPLKSSGQHQNDKGKNVRQRNSS. A phosphoserine mark is found at Ser-362 and Ser-368.

Homooligomer. Interacts with NXNL1. Interacts with SLC2A1 and SLC16A1/GLUT1. Interacts with XKR8; promoting its localization at the cell membrane. In terms of assembly, (Microbial infection) Interacts with P.falciparum (isolate 3D7) RH5/PfRH5; the interaction is required for the invasion of the host erythrocytes by the parasite at the merozoite stage. As to quaternary structure, homooligomer. Forms heterooligomers with isoform 3. Interacts with VEGFA and KDR/VEGFR2. Interacts with PPIA/CYPA. Interacts with PPIL2; regulates BSG transport to the cell membrane. Interacts with SLC16A1; interaction mediates SLC16A3 targeting to the plasma membrane. Interacts with SLC16A12. Interacts with SLC16A11. Interacts with AJAP1. Interacts with SLC1A3, ATP1B2, MAG and L1CAM. Interacts with SLC16A3; interaction mediates SLC16A3 targeting to the plasma membrane. (Microbial infection) Interacts with P.falciparum (isolates 3D7 or 7G8) RH5/PfRH5; the interaction is required for the invasion of the host erythrocytes by the parasite at the merozoite stage. In terms of assembly, (Microbial infection) Does not interact with severe acute respiratory syndrome coronavirus 2 (SARS-CoV-2) spike glycoprotein, even if previous works were based on a putative interaction. As to quaternary structure, forms heterooligomers with isoform 2. Interacts with SLC16A6; this interaction mediates targeting to the plasma membrane. Post-translationally, N-glycosylated. As to expression, retina-specific. Expressed in retinal cone photoreceptors (at protein level). Expressed in erythrocytes (at protein level). Highly expressed in melanoma cell lines (at protein level). Highly expressed in the heart, kidney, skeletal muscle and testis. In terms of tissue distribution, highly expressed in the bone marrow, fetal liver, lung, testis and thymus.

The protein localises to the melanosome. It is found in the cell membrane. It localises to the photoreceptor inner segment. The protein resides in the cell projection. Its subcellular location is the cilium. The protein localises to the photoreceptor outer segment. It is found in the endosome. It localises to the endoplasmic reticulum membrane. The protein resides in the basolateral cell membrane. Its function is as follows. Essential for normal retinal maturation and development. Acts as a retinal cell surface receptor for NXNL1 and plays an important role in NXNL1-mediated survival of retinal cone photoreceptors. In association with glucose transporter SLC16A1/GLUT1 and NXNL1, promotes retinal cone survival by enhancing aerobic glycolysis and accelerating the entry of glucose into photoreceptors. May act as a potent stimulator of IL6 secretion in multiple cell lines that include monocytes. (Microbial infection) Erythrocyte receptor for P.falciparum RH5 which is essential for erythrocyte invasion by the merozoite stage of P.falciparum isolates 3D7 and Dd2. In terms of biological role, signaling receptor for cyclophilins, essential for PPIA/CYPA and PPIB/CYPB-dependent signaling related to chemotaxis and adhesion of immune cells. Plays an important role in targeting monocarboxylate transporters SLC16A1/GLUT1, SLC16A11 and SLC16A12 to the plasma membrane. Acts as a coreceptor for vascular endothelial growth factor receptor 2 (KDR/VEGFR2) in endothelial cells enhancing its VEGFA-mediated activation and downstream signaling. Promotes angiogenesis through EPAS1/HIF2A-mediated up-regulation of VEGFA (isoform VEGF-165 and VEGF-121) and KDR/VEGFR2 in endothelial cells. Plays a key role in regulating tumor growth, invasion, metastasis and neoangiogenesis by stimulating the production and release of extracellular matrix metalloproteinases and KDR/VEGFR2 by both tumor cells and stromal cells (fibroblasts and endothelial cells). Functionally, (Microbial infection) Erythrocyte receptor for P.falciparum RH5 which is essential for erythrocyte invasion by the merozoite stage of P.falciparum isolates 3D7, Dd2, 7G8 and HB3. Binding of P.falciparum RH5 results in BSG dimerization which triggers an increase in intracellular Ca(2+) in the erythrocyte. This essential step leads to a rearrangement of the erythrocyte cytoskeleton required for the merozoite invasion. Its function is as follows. (Microbial infection) Can facilitate human SARS coronavirus (SARS-CoV-1) infection via its interaction with virus-associated PPIA/CYPA. (Microbial infection) Can facilitate HIV-1 infection via its interaction with virus-associated PPIA/CYPA. In terms of biological role, (Microbial infection) First described as a receptor for severe acute respiratory syndrome coronavirus 2 (SARS-CoV-2), it is not required for SARS-CoV-2 infection. Functionally, (Microbial infection) Acts as a receptor for measles virus. Its function is as follows. (Microbial infection) Promotes entry of pentamer-expressing human cytomegalovirus (HCMV) into epithelial and endothelial cells. This is Basigin from Homo sapiens (Human).